A 347-amino-acid polypeptide reads, in one-letter code: Protein RecA (347 aa).

68–75 (GPESSGKT) lines the ATP pocket.

It belongs to the RecA family.

The protein localises to the cytoplasm. In terms of biological role, can catalyze the hydrolysis of ATP in the presence of single-stranded DNA, the ATP-dependent uptake of single-stranded DNA by duplex DNA, and the ATP-dependent hybridization of homologous single-stranded DNAs. It interacts with LexA causing its activation and leading to its autocatalytic cleavage. The chain is Protein RecA from Rhodococcus jostii (strain RHA1).